A 335-amino-acid chain; its full sequence is NADH-quinone oxidoreductase subunit H (335 aa).

The next 8 helical transmembrane spans lie at 11–31, 81–101, 114–134, 154–174, 187–207, 238–258, 270–290, and 307–327; these read VILT…AGAL, VIFT…FAII, IGLL…LFAG, VSYE…VGSF, LWFI…GVAV, FFVG…TLFF, QLSF…FILL, and WKFC…VVLW.

The protein belongs to the complex I subunit 1 family. As to quaternary structure, NDH-1 is composed of 13 different subunits. Subunits NuoA, H, J, K, L, M, N constitute the membrane sector of the complex.

The protein resides in the cell inner membrane. It catalyses the reaction a quinone + NADH + 5 H(+)(in) = a quinol + NAD(+) + 4 H(+)(out). In terms of biological role, NDH-1 shuttles electrons from NADH, via FMN and iron-sulfur (Fe-S) centers, to quinones in the respiratory chain. The immediate electron acceptor for the enzyme in this species is believed to be ubiquinone. Couples the redox reaction to proton translocation (for every two electrons transferred, four hydrogen ions are translocated across the cytoplasmic membrane), and thus conserves the redox energy in a proton gradient. This subunit may bind ubiquinone. This Pseudomonas fluorescens (strain ATCC BAA-477 / NRRL B-23932 / Pf-5) protein is NADH-quinone oxidoreductase subunit H.